The sequence spans 118 residues: Non-specific lipid-transfer protein 3 (118 aa).

The signal sequence occupies residues 1–25 (MARSMNLACVALVMCMVVIAPMAEA). 4 disulfides stabilise this stretch: cysteine 29–cysteine 76, cysteine 39–cysteine 53, cysteine 54–cysteine 99, and cysteine 74–cysteine 113.

The protein belongs to the plant LTP family.

Its function is as follows. Plant non-specific lipid-transfer proteins transfer phospholipids as well as galactolipids across membranes. May play a role in wax or cutin deposition in the cell walls of expanding epidermal cells and certain secretory tissues. The protein is Non-specific lipid-transfer protein 3 of Lens culinaris (Lentil).